A 121-amino-acid chain; its full sequence is Acid shock protein (121 aa).

Positions 1 to 21 (MKKVLALMVAATLGLSSVAFA) are cleaved as a signal peptide. The propeptide occupies 22 to 63 (ADTTATATPAATSTTATVAAQTKATQHQKHKVTKKTTEQKAQ). Positions 40-121 (AAQTKATQHQ…AKKPVAAPAA (82 aa)) are disordered. Residues 84-93 (AAKKHVKKAS) show a composition bias toward basic residues. Positions 94–103 (VQKAPVQKAQ) are enriched in low complexity. The segment covering 104-113 (AAKKHHKTAK) has biased composition (basic residues).

It belongs to the Asr family. Post-translationally, proteolytic processing gives rise to the active protein.

It localises to the periplasm. In terms of biological role, required for growth and/or survival at acidic conditions. The polypeptide is Acid shock protein (Yersinia pestis bv. Antiqua (strain Antiqua)).